We begin with the raw amino-acid sequence, 162 residues long: D-aminoacyl-tRNA deacylase (162 aa).

A Gly-cisPro motif, important for rejection of L-amino acids motif is present at residues 143–144 (GP).

It belongs to the DTD family. As to quaternary structure, homodimer.

It localises to the cytoplasm. It catalyses the reaction glycyl-tRNA(Ala) + H2O = tRNA(Ala) + glycine + H(+). The enzyme catalyses a D-aminoacyl-tRNA + H2O = a tRNA + a D-alpha-amino acid + H(+). In terms of biological role, an aminoacyl-tRNA editing enzyme that deacylates mischarged D-aminoacyl-tRNAs. Also deacylates mischarged glycyl-tRNA(Ala), protecting cells against glycine mischarging by AlaRS. Acts via tRNA-based rather than protein-based catalysis; rejects L-amino acids rather than detecting D-amino acids in the active site. By recycling D-aminoacyl-tRNA to D-amino acids and free tRNA molecules, this enzyme counteracts the toxicity associated with the formation of D-aminoacyl-tRNA entities in vivo and helps enforce protein L-homochirality. The protein is D-aminoacyl-tRNA deacylase of Nitratidesulfovibrio vulgaris (strain ATCC 29579 / DSM 644 / CCUG 34227 / NCIMB 8303 / VKM B-1760 / Hildenborough) (Desulfovibrio vulgaris).